A 138-amino-acid polypeptide reads, in one-letter code: MSWSGLLHGLNTSLTCGPALVPRLWATCSMATLNQMHRLGPPKRPPRKLGPTEGRPQLKGVVLCTFTRKPKKPNSANRKCCRVRLSTGREAVCFIPGEGHTLQEHQIVLVEGGRTQDLPGVKLTVVRGKYDCGHVQKK.

The N-terminal 29 residues, 1–29 (MSWSGLLHGLNTSLTCGPALVPRLWATCS), are a transit peptide targeting the mitochondrion. Residues 36–56 (MHRLGPPKRPPRKLGPTEGRP) are disordered.

It belongs to the universal ribosomal protein uS12 family. In terms of assembly, component of the mitochondrial small ribosomal subunit (mt-SSU). Mature mammalian 55S mitochondrial ribosomes consist of a small (28S) and a large (39S) subunit. The 28S small subunit contains a 12S ribosomal RNA (12S mt-rRNA) and 30 different proteins. The 39S large subunit contains a 16S rRNA (16S mt-rRNA), a copy of mitochondrial valine transfer RNA (mt-tRNA(Val)), which plays an integral structural role, and 52 different proteins.

It localises to the mitochondrion. This is Small ribosomal subunit protein uS12m (MRPS12) from Homo sapiens (Human).